The primary structure comprises 556 residues: Glutamine--tRNA ligase (556 aa).

Residues 34-44 carry the 'HIGH' region motif; that stretch reads PEPNGYLHIGH. ATP is bound by residues 35-37 and 41-47; these read EPN and HIGHAKS. Asp67 and Tyr212 together coordinate L-glutamine. ATP is bound by residues Thr231, 261 to 262, and 269 to 271; these read RL and MSK. The 'KMSKS' region signature appears at 268–272; the sequence is VMSKR.

It belongs to the class-I aminoacyl-tRNA synthetase family. Monomer.

It localises to the cytoplasm. The catalysed reaction is tRNA(Gln) + L-glutamine + ATP = L-glutaminyl-tRNA(Gln) + AMP + diphosphate. The chain is Glutamine--tRNA ligase from Vibrio parahaemolyticus serotype O3:K6 (strain RIMD 2210633).